Reading from the N-terminus, the 884-residue chain is Translation initiation factor IF-2 (884 aa).

Positions 93-288 are disordered; that stretch reads VNTPEAEQAK…KGKRKPSTLQ (196 aa). The segment covering 99–209 has biased composition (basic and acidic residues); it reads EQAKAEEQAQ…KMAAENEGKW (111 aa). The span at 216–229 shows a compositional bias: polar residues; the sequence is QTESADYHVTTSQH. The span at 231 to 246 shows a compositional bias: basic and acidic residues; it reads RAAEDENDAKVEGDRR. Positions 247–261 are enriched in basic residues; that stretch reads SRTRGGKATKQKKGN. The span at 262 to 275 shows a compositional bias: basic and acidic residues; the sequence is KLSESKADREEARA. One can recognise a tr-type G domain in the interval 383–552; the sequence is HRAPVVTIMG…LLQAEVLELK (170 aa). Residues 392 to 399 form a G1 region; the sequence is GHVDHGKT. 392–399 contributes to the GTP binding site; it reads GHVDHGKT. The segment at 417–421 is G2; it reads GITQH. Positions 438-441 are G3; the sequence is DTPG. GTP-binding positions include 438-442 and 492-495; these read DTPGH and NKID. Residues 492–495 form a G4 region; it reads NKID. The interval 528–530 is G5; the sequence is SAK.

The protein belongs to the TRAFAC class translation factor GTPase superfamily. Classic translation factor GTPase family. IF-2 subfamily.

Its subcellular location is the cytoplasm. Its function is as follows. One of the essential components for the initiation of protein synthesis. Protects formylmethionyl-tRNA from spontaneous hydrolysis and promotes its binding to the 30S ribosomal subunits. Also involved in the hydrolysis of GTP during the formation of the 70S ribosomal complex. The polypeptide is Translation initiation factor IF-2 (Yersinia pestis bv. Antiqua (strain Angola)).